The sequence spans 466 residues: UDP-N-acetylmuramate--L-alanine ligase (466 aa).

An ATP-binding site is contributed by 117-123 (GTHGKTT).

The protein belongs to the MurCDEF family.

It localises to the cytoplasm. It catalyses the reaction UDP-N-acetyl-alpha-D-muramate + L-alanine + ATP = UDP-N-acetyl-alpha-D-muramoyl-L-alanine + ADP + phosphate + H(+). The protein operates within cell wall biogenesis; peptidoglycan biosynthesis. Cell wall formation. The sequence is that of UDP-N-acetylmuramate--L-alanine ligase from Streptomyces griseus subsp. griseus (strain JCM 4626 / CBS 651.72 / NBRC 13350 / KCC S-0626 / ISP 5235).